The following is a 173-amino-acid chain: Translation initiation factor IF-3 (173 aa).

It belongs to the IF-3 family. Monomer.

Its subcellular location is the cytoplasm. IF-3 binds to the 30S ribosomal subunit and shifts the equilibrium between 70S ribosomes and their 50S and 30S subunits in favor of the free subunits, thus enhancing the availability of 30S subunits on which protein synthesis initiation begins. This is Translation initiation factor IF-3 from Lactiplantibacillus plantarum (strain ATCC BAA-793 / NCIMB 8826 / WCFS1) (Lactobacillus plantarum).